A 115-amino-acid polypeptide reads, in one-letter code: MALNWSFRVIFVSAMWCALLKFATLEEREDDNDYGGGCPFVVLGNGTHAKPAGCSHLCNGAPETLDNIECYNVTEEVAKRMTPDIPYTCWLGWCSKGECKRDNRTEVCYRGSERE.

Positions 1-25 (MALNWSFRVIFVSAMWCALLKFATL) are cleaved as a signal peptide. Intrachain disulfides connect cysteine 38–cysteine 58, cysteine 54–cysteine 94, cysteine 70–cysteine 99, and cysteine 89–cysteine 108. N-linked (GlcNAc...) asparagine glycosylation is found at asparagine 45, asparagine 72, and asparagine 103.

The protein localises to the secreted. Salivary chemokine-binding protein which binds to host chemokines CCL3 and CCL4. The polypeptide is Evasin P1181 (Amblyomma maculatum (Gulf Coast tick)).